The following is a 301-amino-acid chain: Large ribosomal subunit protein uL4 (301 aa).

The large ribosomal subunit protein uL4 stretch occupies residues 1-223 (MNETKTIDVL…TQALSAQPEV (223 aa)). The segment at 49–105 (QGTHATKTRGQVSGGGKKPWRQKGTGRARQGSTRAPQWVGGGTVHGPQPRSYAQRTP) is disordered. A unknown region spans residues 224-301 (PETNVADQHP…KSDSEKEDAK (78 aa)).

The protein belongs to the universal ribosomal protein uL4 family. As to quaternary structure, part of the 50S ribosomal subunit.

Its function is as follows. One of the primary rRNA binding proteins, this protein initially binds near the 5'-end of the 23S rRNA. It is important during the early stages of 50S assembly. It makes multiple contacts with different domains of the 23S rRNA in the assembled 50S subunit and ribosome. Functionally, forms part of the polypeptide exit tunnel. This chain is Large ribosomal subunit protein uL4, found in Cutibacterium acnes (strain DSM 16379 / KPA171202) (Propionibacterium acnes).